Reading from the N-terminus, the 965-residue chain is MPALPPVYTPSGAPSSVHAPPAVPPVPVPTQPLRSEYQTSNDACIKRLEELNIAPAAKLYPTPTEPGKCGVEAEIQTNVFGIEMHQDSLFYQYSVNITTELKNGKEVTFTKKGKDDFVVTERHDKCCAILFRALGDYEEFFKTSDSCLIYDGQSILFSNVDLFQGFREGAVKTKYMQLDGGEMDHKDLKSLPCIKLEVFPTKNPAVKFTREAVARRATDSNLDSVSLAYQQILELALTQPCLRNTARYVVFDHGKMFFIDPLGEGFEKCDVVDVGDGKQVVPGLKKTINFIEGPYGRGRSNPSVVIDGMKVAFHKNQPILDKLKEITTQPVEHGLKGLEKDRCAAVIKGLDCYSTYGGRERHHKIEGIHHEGARNARFELNDGGSCTVAQYFEDVYNITLRYPDTNLIVSKERGNINFYPMELLKISSHQRVQIPQLTSAQSQKTTKESAVLPDVRQRLILTGKNAAQISSDNEVLGKMGVSVCEDPLMVKGRSIPAVKLANAEIGANPINVKDNKWRANRFTRPATAPNVWAMYVVGTASTRITLDTLKKFADEFAAMCKSKGVNMPAPADISLIHMDAIESRLYDATKANCTFVFIITDDSITTLHQRYKMIEKDTKMIVQDMKLSKALSVINAGKRLTLENVINKTNVKLGGSNYVFVDAKKQLDSHLIIGVGISAPPAGTKYAMENKGVLNPNVIGYAYNAQHNQEFSGDFVLNSASQDTLAPIEDIVMHSLNEYQKFHDGGLPRRVIVYRTGTSEGNHGSIMAYEIPLARAAMRDFSPDIQLVYIVVSKDHSFRFFKPDLASLASRPQATSSTASRHSAMPAAPKAWDLNIAPGILVDSIVTNPACKQFFLNSHITLQGTAKTPLYTVLADDAKVSMTALEDITYKLCHLHQIVGLPTSLPTPLYVANEYAKRGRNLWNEAVALNNVPTVSGPEADRLKELTKSICYKASGDLTGRRVNA.

The segment at 1-34 (MPALPPVYTPSGAPSSVHAPPAVPPVPVPTQPLR) is disordered. A compositionally biased stretch (low complexity) spans 10–20 (PSGAPSSVHAP). A compositionally biased stretch (pro residues) spans 21–30 (PAVPPVPVPT). Residues 318–428 (PILDKLKEIT…YPMELLKISS (111 aa)) enclose the PAZ domain. Residues 594 to 924 (TFVFIITDDS…YAKRGRNLWN (331 aa)) enclose the Piwi domain.

This sequence belongs to the argonaute family. WAGO subfamily. Interacts with znfx-1; the interaction promotes the transmission of epigenetic information across generations. May interact with mina-1. In terms of tissue distribution, expressed in the hermaphrodite germline and in oocytes. Expressed at a low level in the male germline. Not expressed in the soma of hermaphrodites or males.

Its subcellular location is the cytoplasm. The protein localises to the perinuclear region. The protein resides in the cytoplasmic granule. In terms of biological role, argonaute protein which is involved in the endogenous small interfering RNA (endo-siRNA) pathway and is required for RNA-mediated gene silencing (RNAi) in the germline. Interacts with secondary 22G-RNAs, which are RNA-dependent RNA polymerase-derived endo-siRNAs, typically 22 nucleotides in length with a 5'guanosine residue. Also interacts with the mRNA targets of 22G-RNAs. Associates with znfx-1 to mediate small RNA-directed transgenerational epigenetic inheritance of both germline- and soma-expressed genes. The polypeptide is Argonaute protein wago-4 (Caenorhabditis elegans).